Here is an 810-residue protein sequence, read N- to C-terminus: Cell division control protein 48 homolog E (810 aa).

An N-acetylserine modification is found at Ser2. Phosphoserine is present on Ser41. ATP is bound by residues 248-255 (GPPGSGKT) and 521-528 (GPPGCGKT).

The protein belongs to the AAA ATPase family.

It localises to the nucleus. Its subcellular location is the cytoplasm. The protein localises to the cytoskeleton. It is found in the phragmoplast. Functionally, probably functions in cell division and growth processes. Interacts with certain SNAREs as part of specialized membrane fusion events where vesicles from the same organelle fuse (homotypic fusion). The chain is Cell division control protein 48 homolog E (CDC48E) from Arabidopsis thaliana (Mouse-ear cress).